The primary structure comprises 206 residues: MSLLKNLLAPCLALLLAGCAALGPHESVEGPGNTAAWKEHRSHVATLDGWQISGKIGIRAPQESGSGTLFWLQRQDYFDIRLSGPLGRGATRLTGRPDAVSLEVAGQGRFEAESPEALVEAQLGWQLPVSHLLWWVRGLPAPDSRSRLSIDSESRLARLEQDGWQVEYLAYAEHNGFVLPERIRLQGHDLQITLVIKDWQPRQLGR.

Positions 1-18 are cleaved as a signal peptide; sequence MSLLKNLLAPCLALLLAG. Cysteine 19 carries N-palmitoyl cysteine lipidation. A lipid anchor (S-diacylglycerol cysteine) is attached at cysteine 19.

Belongs to the LolB family. As to quaternary structure, monomer.

The protein localises to the cell outer membrane. Plays a critical role in the incorporation of lipoproteins in the outer membrane after they are released by the LolA protein. The polypeptide is Outer-membrane lipoprotein LolB (Stutzerimonas stutzeri (strain A1501) (Pseudomonas stutzeri)).